Consider the following 404-residue polypeptide: 4-hydroxy-3-methylbut-2-en-1-yl diphosphate synthase (ferredoxin) (404 aa).

Positions 313, 316, 347, and 354 each coordinate [4Fe-4S] cluster.

It belongs to the IspG family. The cofactor is [4Fe-4S] cluster.

It catalyses the reaction (2E)-4-hydroxy-3-methylbut-2-enyl diphosphate + 2 oxidized [2Fe-2S]-[ferredoxin] + H2O = 2-C-methyl-D-erythritol 2,4-cyclic diphosphate + 2 reduced [2Fe-2S]-[ferredoxin] + H(+). It participates in isoprenoid biosynthesis; isopentenyl diphosphate biosynthesis via DXP pathway; isopentenyl diphosphate from 1-deoxy-D-xylulose 5-phosphate: step 5/6. Functionally, converts 2C-methyl-D-erythritol 2,4-cyclodiphosphate (ME-2,4cPP) into 1-hydroxy-2-methyl-2-(E)-butenyl 4-diphosphate. The protein is 4-hydroxy-3-methylbut-2-en-1-yl diphosphate synthase (ferredoxin) of Crocosphaera subtropica (strain ATCC 51142 / BH68) (Cyanothece sp. (strain ATCC 51142)).